The primary structure comprises 267 residues: 3-methyl-2-oxobutanoate hydroxymethyltransferase (267 aa).

Mg(2+) is bound by residues D46 and D85. Residues 46–47 (DS), D85, and K115 contribute to the 3-methyl-2-oxobutanoate site. E117 contacts Mg(2+). Catalysis depends on E184, which acts as the Proton acceptor.

The protein belongs to the PanB family. Homodecamer; pentamer of dimers. Mg(2+) serves as cofactor.

The protein localises to the cytoplasm. The catalysed reaction is 3-methyl-2-oxobutanoate + (6R)-5,10-methylene-5,6,7,8-tetrahydrofolate + H2O = 2-dehydropantoate + (6S)-5,6,7,8-tetrahydrofolate. It functions in the pathway cofactor biosynthesis; (R)-pantothenate biosynthesis; (R)-pantoate from 3-methyl-2-oxobutanoate: step 1/2. In terms of biological role, catalyzes the reversible reaction in which hydroxymethyl group from 5,10-methylenetetrahydrofolate is transferred onto alpha-ketoisovalerate to form ketopantoate. This chain is 3-methyl-2-oxobutanoate hydroxymethyltransferase, found in Citrifermentans bemidjiense (strain ATCC BAA-1014 / DSM 16622 / JCM 12645 / Bem) (Geobacter bemidjiensis).